Here is a 256-residue protein sequence, read N- to C-terminus: Imidazole glycerol phosphate synthase subunit HisF (256 aa).

Catalysis depends on residues aspartate 11 and aspartate 130.

The protein belongs to the HisA/HisF family. Heterodimer of HisH and HisF.

Its subcellular location is the cytoplasm. It catalyses the reaction 5-[(5-phospho-1-deoxy-D-ribulos-1-ylimino)methylamino]-1-(5-phospho-beta-D-ribosyl)imidazole-4-carboxamide + L-glutamine = D-erythro-1-(imidazol-4-yl)glycerol 3-phosphate + 5-amino-1-(5-phospho-beta-D-ribosyl)imidazole-4-carboxamide + L-glutamate + H(+). Its pathway is amino-acid biosynthesis; L-histidine biosynthesis; L-histidine from 5-phospho-alpha-D-ribose 1-diphosphate: step 5/9. Its function is as follows. IGPS catalyzes the conversion of PRFAR and glutamine to IGP, AICAR and glutamate. The HisF subunit catalyzes the cyclization activity that produces IGP and AICAR from PRFAR using the ammonia provided by the HisH subunit. The polypeptide is Imidazole glycerol phosphate synthase subunit HisF (Prochlorococcus marinus (strain MIT 9301)).